A 278-amino-acid polypeptide reads, in one-letter code: Bis(5'-nucleosyl)-tetraphosphatase, symmetrical (278 aa).

Belongs to the Ap4A hydrolase family.

It carries out the reaction P(1),P(4)-bis(5'-adenosyl) tetraphosphate + H2O = 2 ADP + 2 H(+). Functionally, hydrolyzes diadenosine 5',5'''-P1,P4-tetraphosphate to yield ADP. This chain is Bis(5'-nucleosyl)-tetraphosphatase, symmetrical, found in Methylococcus capsulatus (strain ATCC 33009 / NCIMB 11132 / Bath).